The sequence spans 809 residues: Glutamine--tRNA ligase (809 aa).

Positions 185–198 are enriched in basic and acidic residues; that stretch reads DLIKKKTKNNEKKK. The interval 185–216 is disordered; the sequence is DLIKKKTKNNEKKKTNSAKKSSDNSASSGPKR. The 'HIGH' region motif lies at 258–268; it reads PEPNGYLHIGH. ATP-binding positions include 259 to 261 and 265 to 271; these read EPN and HIGHSKA. Asp291 is an L-glutamine binding site. At Ser378 the chain carries Phosphoserine. L-glutamine is bound at residue Tyr440. Residues Thr459, 488–489, and 496–498 each bind ATP; these read RL and LSK. The short motif at 495-499 is the 'KMSKS' region element; that stretch reads VLSKR.

It belongs to the class-I aminoacyl-tRNA synthetase family.

The enzyme catalyses tRNA(Gln) + L-glutamine + ATP = L-glutaminyl-tRNA(Gln) + AMP + diphosphate. The sequence is that of Glutamine--tRNA ligase (GLN4) from Saccharomyces cerevisiae (strain ATCC 204508 / S288c) (Baker's yeast).